A 410-amino-acid chain; its full sequence is Tryptophan synthase beta chain (410 aa).

At lysine 99 the chain carries N6-(pyridoxal phosphate)lysine.

Belongs to the TrpB family. In terms of assembly, tetramer of two alpha and two beta chains. Pyridoxal 5'-phosphate serves as cofactor.

The catalysed reaction is (1S,2R)-1-C-(indol-3-yl)glycerol 3-phosphate + L-serine = D-glyceraldehyde 3-phosphate + L-tryptophan + H2O. Its pathway is amino-acid biosynthesis; L-tryptophan biosynthesis; L-tryptophan from chorismate: step 5/5. In terms of biological role, the beta subunit is responsible for the synthesis of L-tryptophan from indole and L-serine. The sequence is that of Tryptophan synthase beta chain from Pseudomonas fluorescens (strain Pf0-1).